The primary structure comprises 327 residues: 2-methoxy-6-polyprenyl-1,4-benzoquinol methylase, mitochondrial (327 aa).

The N-terminal 43 residues, 1-43, are a transit peptide targeting the mitochondrion; sequence MAAPIRAFVLRVLSDSTRNIHHVLRCRSKYLCRRAAITARRGY. S-adenosyl-L-methionine-binding positions include Thr117, Asp171, and 199-200; that span reads DA.

This sequence belongs to the class I-like SAM-binding methyltransferase superfamily. MenG/UbiE family. In terms of assembly, component of a multi-subunit COQ enzyme complex, composed of at least coq3, coq4, coq5, coq6, coq7 and coq9.

The protein resides in the mitochondrion inner membrane. The catalysed reaction is a 2-methoxy-6-(all-trans-polyprenyl)benzene-1,4-diol + S-adenosyl-L-methionine = a 5-methoxy-2-methyl-3-(all-trans-polyprenyl)benzene-1,4-diol + S-adenosyl-L-homocysteine + H(+). It functions in the pathway cofactor biosynthesis; ubiquinone biosynthesis. Its function is as follows. Methyltransferase required for the conversion of 2-polyprenyl-6-methoxy-1,4-benzoquinol (DDMQH2) to 2-polyprenyl-3-methyl-6-methoxy-1,4-benzoquinol (DMQH2). This is 2-methoxy-6-polyprenyl-1,4-benzoquinol methylase, mitochondrial from Danio rerio (Zebrafish).